The primary structure comprises 326 residues: MKKIVVIPGDGIGKEVMEAAMLILEKLDLPFEYSYYDAGDEALEKYGKALPDETLEACRKSDAVLFGAAGETAADVIVRLRRELGTFANVRPAKAIEGIECLYPGLDIVVVRENTECLYMGFEFGFGDVTEAIRVITREASERIARYAFELAKREGRKKVTALHKANVMKKTCGLFRDVCREVAKDYPEIQYNDYYIDAACMYLVMDPFRFDVIVTTNMFGDIVSDLAAGLVGGLGLAPSANVGERTAIFEPVHGAAFDIAGKGIANPTAMILTACMMLRHFGYVEEAKKVEEAVEKTIKEGKKTPDLGGNLKTMEFANEVASLLD.

Arg-81, Arg-91, Arg-112, and Asp-198 together coordinate substrate. The Mg(2+) site is built by Asp-198, Asp-222, and Asp-226. Residue Gly-255–Asn-267 coordinates NAD(+).

Belongs to the isocitrate and isopropylmalate dehydrogenases family. In terms of assembly, homotetramer. Requires Mg(2+) as cofactor. Mn(2+) serves as cofactor.

The protein resides in the cytoplasm. It carries out the reaction (2R,3S)-3-isopropylmalate + NAD(+) = 4-methyl-2-oxopentanoate + CO2 + NADH. Its pathway is amino-acid biosynthesis; L-leucine biosynthesis; L-leucine from 3-methyl-2-oxobutanoate: step 3/4. In terms of biological role, catalyzes the oxidation of 3-carboxy-2-hydroxy-4-methylpentanoate (3-isopropylmalate) to 3-carboxy-4-methyl-2-oxopentanoate. The product decarboxylates to 4-methyl-2 oxopentanoate. This is 3-isopropylmalate dehydrogenase (leuB) from Archaeoglobus fulgidus (strain ATCC 49558 / DSM 4304 / JCM 9628 / NBRC 100126 / VC-16).